The following is a 353-amino-acid chain: Photosystem II D2 protein (353 aa).

At T2 the chain carries N-acetylthreonine. T2 carries the post-translational modification Phosphothreonine. A helical membrane pass occupies residues 41–61 (CAYFALGGWFTGTTFVTSWYT). Residue H118 coordinates chlorophyll a. The chain crosses the membrane as a helical span at residues 125 to 141 (GFMLRQFELARSVQLRP). 2 residues coordinate pheophytin a: Q130 and N143. The chain crosses the membrane as a helical span at residues 153–166 (VFVSVFLIYPLGQS). Residue H198 participates in chlorophyll a binding. A helical membrane pass occupies residues 208 to 228 (AALLCAIHGATVENTLFEDGD). A plastoquinone-binding residues include H215 and F262. H215 contributes to the Fe cation binding site. H269 lines the Fe cation pocket. Residues 279-295 (GLWMSAIGVVGLALNLR) form a helical membrane-spanning segment.

The protein belongs to the reaction center PufL/M/PsbA/D family. In terms of assembly, PSII is composed of 1 copy each of membrane proteins PsbA, PsbB, PsbC, PsbD, PsbE, PsbF, PsbH, PsbI, PsbJ, PsbK, PsbL, PsbM, PsbT, PsbX, PsbY, PsbZ, Psb30/Ycf12, at least 3 peripheral proteins of the oxygen-evolving complex and a large number of cofactors. It forms dimeric complexes. The cofactor is The D1/D2 heterodimer binds P680, chlorophylls that are the primary electron donor of PSII, and subsequent electron acceptors. It shares a non-heme iron and each subunit binds pheophytin, quinone, additional chlorophylls, carotenoids and lipids. There is also a Cl(-1) ion associated with D1 and D2, which is required for oxygen evolution. The PSII complex binds additional chlorophylls, carotenoids and specific lipids..

It localises to the plastid. The protein localises to the chloroplast thylakoid membrane. The catalysed reaction is 2 a plastoquinone + 4 hnu + 2 H2O = 2 a plastoquinol + O2. Functionally, photosystem II (PSII) is a light-driven water:plastoquinone oxidoreductase that uses light energy to abstract electrons from H(2)O, generating O(2) and a proton gradient subsequently used for ATP formation. It consists of a core antenna complex that captures photons, and an electron transfer chain that converts photonic excitation into a charge separation. The D1/D2 (PsbA/PsbD) reaction center heterodimer binds P680, the primary electron donor of PSII as well as several subsequent electron acceptors. D2 is needed for assembly of a stable PSII complex. This Drimys granadensis protein is Photosystem II D2 protein.